The primary structure comprises 88 residues: Small ribosomal subunit protein bS20 (88 aa).

The protein belongs to the bacterial ribosomal protein bS20 family.

In terms of biological role, binds directly to 16S ribosomal RNA. The protein is Small ribosomal subunit protein bS20 of Aromatoleum aromaticum (strain DSM 19018 / LMG 30748 / EbN1) (Azoarcus sp. (strain EbN1)).